The sequence spans 137 residues: NADPH-dependent 7-cyano-7-deazaguanine reductase (137 aa).

Cys-51 serves as the catalytic Thioimide intermediate. Asp-58 functions as the Proton donor in the catalytic mechanism. Residues 73 to 75 (VEL) and 92 to 93 (HE) contribute to the substrate site.

The protein belongs to the GTP cyclohydrolase I family. QueF type 1 subfamily.

Its subcellular location is the cytoplasm. It carries out the reaction 7-aminomethyl-7-carbaguanine + 2 NADP(+) = 7-cyano-7-deazaguanine + 2 NADPH + 3 H(+). Its pathway is tRNA modification; tRNA-queuosine biosynthesis. Its function is as follows. Catalyzes the NADPH-dependent reduction of 7-cyano-7-deazaguanine (preQ0) to 7-aminomethyl-7-deazaguanine (preQ1). The sequence is that of NADPH-dependent 7-cyano-7-deazaguanine reductase from Gloeobacter violaceus (strain ATCC 29082 / PCC 7421).